We begin with the raw amino-acid sequence, 307 residues long: Ornithine carbamoyltransferase (307 aa).

Carbamoyl phosphate is bound by residues 56 to 59 (STRT), Gln-83, Arg-107, and 134 to 137 (HPCQ). L-ornithine-binding positions include Asn-165, Asp-223, and 227-228 (SM). Carbamoyl phosphate contacts are provided by residues 263–264 (CL) and Arg-291.

The protein belongs to the aspartate/ornithine carbamoyltransferase superfamily. OTCase family.

It is found in the cytoplasm. It catalyses the reaction carbamoyl phosphate + L-ornithine = L-citrulline + phosphate + H(+). The protein operates within amino-acid degradation; L-arginine degradation via ADI pathway; carbamoyl phosphate from L-arginine: step 2/2. Functionally, reversibly catalyzes the transfer of the carbamoyl group from carbamoyl phosphate (CP) to the N(epsilon) atom of ornithine (ORN) to produce L-citrulline. This chain is Ornithine carbamoyltransferase, found in Cupriavidus taiwanensis (strain DSM 17343 / BCRC 17206 / CCUG 44338 / CIP 107171 / LMG 19424 / R1) (Ralstonia taiwanensis (strain LMG 19424)).